Here is a 162-residue protein sequence, read N- to C-terminus: Toluate 1,2-dioxygenase subunit beta (162 aa).

This sequence belongs to the bacterial ring-hydroxylating dioxygenase beta subunit family. This dioxygenase system consists of three proteins: the two subunits of the hydroxylase component (XylX and XylY), and an electron transfer component (XylZ).

It functions in the pathway xenobiotic degradation; toluene degradation. In Pseudomonas putida (Arthrobacter siderocapsulatus), this protein is Toluate 1,2-dioxygenase subunit beta (xylY).